The chain runs to 527 residues: MDEEEEEEVTDLKLQLFHNTVREHIIFLLLIILLYSSSYVVVSRFRRRDRDDLYSNDEDEVLVYRISFWLCTFTLAVAEGAAMLLPVSIASNEVLLLYPNSYYVKWLNSSLIQGLWNHVFLFSNLSLFIFLPFVYLFSESTGFVGNKKGILPRVYETFTVFMLMAIIVLVLTAVLSAVFGIEKLQFFWFLNLGSVHLPFLYSCVSFLGVMLMLICTPYGFVRLFGVVNQVLVRPMLLRDVNEEFSAFYMEEASVKRKLAHIELHNVSIADAANGGRLGNRIGLGRGRTFYPQPLLQHSQAHLYQRKAMASDVDELNDRLRELDSERKELDKLRTSSTFQRTFVYPLAMLLLLFCTAVTILLVVQNTLELLIGIKALPLSTRQFALGISSLSKLGPFGAGLEVCLIFYLGATSVVGFYSMPFMRKVCPKRRQTSLPQLMLNCGFMLVLSSALPLLSRIIGITNFDLLGDFGAIEWLGNFQIVLLYNLVFGTTTALCLANKFTATVRRELRARLVENYVLFTNYISFIN.

The Extracellular segment spans residues 1 to 22 (MDEEEEEEVTDLKLQLFHNTVR). The helical transmembrane segment at 23 to 43 (EHIIFLLLIILLYSSSYVVVS) threads the bilayer. Residues 44–65 (RFRRRDRDDLYSNDEDEVLVYR) lie on the Cytoplasmic side of the membrane. Residues 66–86 (ISFWLCTFTLAVAEGAAMLLP) traverse the membrane as a helical segment. Residues 87–117 (VSIASNEVLLLYPNSYYVKWLNSSLIQGLWN) lie on the Extracellular side of the membrane. Residues 118-138 (HVFLFSNLSLFIFLPFVYLFS) traverse the membrane as a helical segment. Topologically, residues 139–160 (ESTGFVGNKKGILPRVYETFTV) are cytoplasmic. A helical membrane pass occupies residues 161-181 (FMLMAIIVLVLTAVLSAVFGI). Topologically, residues 182–194 (EKLQFFWFLNLGS) are extracellular. Residues 195-215 (VHLPFLYSCVSFLGVMLMLIC) form a helical membrane-spanning segment. The Cytoplasmic portion of the chain corresponds to 216-341 (TPYGFVRLFG…LRTSSTFQRT (126 aa)). The helical transmembrane segment at 342–362 (FVYPLAMLLLLFCTAVTILLV) threads the bilayer. Residues 363 to 395 (VQNTLELLIGIKALPLSTRQFALGISSLSKLGP) lie on the Extracellular side of the membrane. The helical transmembrane segment at 396–416 (FGAGLEVCLIFYLGATSVVGF) threads the bilayer. The Cytoplasmic portion of the chain corresponds to 417–433 (YSMPFMRKVCPKRRQTS). Residues 434-454 (LPQLMLNCGFMLVLSSALPLL) form a helical membrane-spanning segment. Topologically, residues 455–468 (SRIIGITNFDLLGD) are extracellular. A helical membrane pass occupies residues 469–489 (FGAIEWLGNFQIVLLYNLVFG). Residues 490–527 (TTTALCLANKFTATVRRELRARLVENYVLFTNYISFIN) lie on the Cytoplasmic side of the membrane.

It belongs to the LIMR family. In the ovary, detected in germline stem cells and their progeny. Also detected in the somatic follicular epithelium.

Its subcellular location is the cell membrane. In terms of biological role, required during oogenesis to promote self-renewal of germline stem cells, probably by enhancing BMP signaling activity. The polypeptide is Protein Lilipod (Drosophila melanogaster (Fruit fly)).